The primary structure comprises 527 residues: Triostin synthetase I (527 aa).

187–188 (GG) provides a ligand contact to ATP. 230 to 231 (HQ) is a binding site for substrate. ATP-binding positions include 300 to 302 (SAP), aspartate 406, arginine 421, and lysine 512. Lysine 512 is a binding site for substrate.

This sequence belongs to the ATP-dependent AMP-binding enzyme family. Monomer.

Its function is as follows. Involved in triostin biosynthesis. Activates quinoxaline-2-carboxylic acid (QA) via catalysis of the ATP-pyrophosphate exchange reaction dependent on QA, and the formation of the corresponding adenylate. Also activates structural analogs of QA such as quinoline-2-carboxylic acid and thieno[3,2-b]pyridine-5-carboxylic acid, but not quinoline-3-carboxylic acid, quinoline-4-carboxylic acid, pyridine-2-carboxylic acid or 2-pyrazinecarboxylic acid. This is Triostin synthetase I (trsA) from Streptomyces triostinicus.